The following is a 461-amino-acid chain: Deoxyguanosinetriphosphate triphosphohydrolase-like protein (461 aa).

Residues 22–41 (ERFLPDPPREKDNRPPFRRD) are disordered. Positions 24–41 (FLPDPPREKDNRPPFRRD) are enriched in basic and acidic residues. The HD domain occupies 72-285 (RLTHSLEVAQ…MELADDIAYG (214 aa)).

This sequence belongs to the dGTPase family. Type 2 subfamily.

This chain is Deoxyguanosinetriphosphate triphosphohydrolase-like protein, found in Haemophilus influenzae (strain PittGG).